A 364-amino-acid polypeptide reads, in one-letter code: ERCC4 domain-containing protein EP364R (364 aa).

The 100-residue stretch at 3–102 (FLVADHREHH…QLYFFVEGPA (100 aa)) folds into the ERCC4 domain. The segment covering 319–328 (ASRPATQPAA) has biased composition (polar residues). Residues 319-352 (ASRPATQPAATQPLHEVSDDATSNASDTSSPIGH) form a disordered region. Over residues 338–348 (DATSNASDTSS) the composition is skewed to low complexity.

The protein belongs to the asfivirus EP364R family.

Its function is as follows. Plays a role in the inhibition of type I interferon signaling pathway. Mechanistically, specifically interacts with 2',3'-cGAMP and cleaves it via its phosphodiesterase activity. In turn, prevents 2',3'-cGAMP interaction with host ER-resident STING1 leading to inhibition of downstream signaling pathway and type I interferon production. The chain is ERCC4 domain-containing protein EP364R from African swine fever virus (strain Badajoz 1971 Vero-adapted) (Ba71V).